The sequence spans 854 residues: Iron and copper transporter IacT (854 aa).

The short motif at 187-194 (IELIVTAQ) is the TonB box element. In terms of domain architecture, TBDR plug spans 199 to 315 (DAQDVPLSLT…PAGVVNVISR (117 aa)). Positions 320-854 (QPEMRISALY…TYGVRVSASF (535 aa)) constitute a TBDR beta-barrel domain. The short motif at 839–854 (GFGDPVTYGVRVSASF) is the TonB C-terminal box element.

This sequence belongs to the TonB-dependent receptor family.

It localises to the cell outer membrane. Its function is as follows. Involved in the TonB-dependent uptake of copper and iron under conditions in which the concentration of copper exceeds that of the iron. This is Iron and copper transporter IacT from Nostoc sp. (strain PCC 7120 / SAG 25.82 / UTEX 2576).